Consider the following 272-residue polypeptide: Putative phosphoenolpyruvate synthase regulatory protein (272 aa).

Residue 152–159 participates in ADP binding; sequence GVSRCGKT.

It belongs to the pyruvate, phosphate/water dikinase regulatory protein family. PSRP subfamily.

It carries out the reaction [pyruvate, water dikinase] + ADP = [pyruvate, water dikinase]-phosphate + AMP + H(+). The catalysed reaction is [pyruvate, water dikinase]-phosphate + phosphate + H(+) = [pyruvate, water dikinase] + diphosphate. Its function is as follows. Bifunctional serine/threonine kinase and phosphorylase involved in the regulation of the phosphoenolpyruvate synthase (PEPS) by catalyzing its phosphorylation/dephosphorylation. This Ectopseudomonas mendocina (strain ymp) (Pseudomonas mendocina) protein is Putative phosphoenolpyruvate synthase regulatory protein.